A 293-amino-acid polypeptide reads, in one-letter code: Cell division protein FtsQ (293 aa).

Residues 1–29 (MSQVRSKSQQGKRQAKPQEVVPATILTEQ) lie on the Cytoplasmic side of the membrane. A helical transmembrane segment spans residues 30–52 (LSTYAFGTVTAGAVMVAVAAWMG). At 53-293 (GSLASIDERI…SQIDDKSGGA (241 aa)) the chain is on the periplasmic side. The 70-residue stretch at 75 to 144 (FTVTKISIEG…NDIWILAENR (70 aa)) folds into the POTRA domain.

This sequence belongs to the FtsQ/DivIB family. FtsQ subfamily.

Its subcellular location is the cell inner membrane. Functionally, essential cell division protein. The polypeptide is Cell division protein FtsQ (Hirschia baltica (strain ATCC 49814 / DSM 5838 / IFAM 1418)).